The primary structure comprises 1931 residues: Cytadherence high molecular weight protein 2 (1931 aa).

Coiled-coil stretches lie at residues 1626 to 1659 (KEHQ…LTES), 1768 to 1846 (FNTQ…IKTN), and 1903 to 1930 (HAKK…KQTS).

In terms of biological role, component of the cytoskeleton-like structure which stabilizes the shape of the wall-less Mycoplasma. This cytoskeleton-like network of accessory proteins containing HMW proteins 1 to 5 allows the proper anchoring of cytadhesin proteins in the mycoplasmal membrane at the attachment organelle. The polypeptide is Cytadherence high molecular weight protein 2 (hlp2) (Mycoplasmoides gallisepticum (strain R(low / passage 15 / clone 2)) (Mycoplasma gallisepticum)).